A 349-amino-acid polypeptide reads, in one-letter code: Ribosomal RNA small subunit methyltransferase H 2 (349 aa).

S-adenosyl-L-methionine is bound by residues 80–82 (GGH), D100, F130, D149, and Q156.

The protein belongs to the methyltransferase superfamily. RsmH family.

The protein resides in the cytoplasm. The enzyme catalyses cytidine(1402) in 16S rRNA + S-adenosyl-L-methionine = N(4)-methylcytidine(1402) in 16S rRNA + S-adenosyl-L-homocysteine + H(+). In terms of biological role, specifically methylates the N4 position of cytidine in position 1402 (C1402) of 16S rRNA. In Alkaliphilus metalliredigens (strain QYMF), this protein is Ribosomal RNA small subunit methyltransferase H 2.